Here is a 351-residue protein sequence, read N- to C-terminus: Photosystem II D2 protein (351 aa).

The chain crosses the membrane as a helical span at residues 39–59; it reads TAYLAIGGWLTGTTFVTSWYT. Chlorophyll a is bound at residue H116. The helical transmembrane segment at 123 to 139 threads the bilayer; that stretch reads GFMLRQFEIARLVGIRP. Pheophytin a-binding residues include Q128 and N141. A helical transmembrane segment spans residues 151 to 164; that stretch reads VFVSVFLMYPLGQS. H196 is a chlorophyll a binding site. Residues 206–226 traverse the membrane as a helical segment; the sequence is GALLCAIHGATVENTLFEDGE. Residues H213 and F260 each coordinate a plastoquinone. H213 contributes to the Fe cation binding site. H267 contacts Fe cation. The helical transmembrane segment at 277 to 293 threads the bilayer; the sequence is GLWTSSIGIIGLALNLR.

This sequence belongs to the reaction center PufL/M/PsbA/D family. In terms of assembly, PSII is composed of 1 copy each of membrane proteins PsbA, PsbB, PsbC, PsbD, PsbE, PsbF, PsbH, PsbI, PsbJ, PsbK, PsbL, PsbM, PsbT, PsbX, PsbY, PsbZ, Psb30/Ycf12, peripheral proteins PsbO, CyanoQ (PsbQ), PsbU, PsbV and a large number of cofactors. It forms dimeric complexes. It depends on The D1/D2 heterodimer binds P680, chlorophylls that are the primary electron donor of PSII, and subsequent electron acceptors. It shares a non-heme iron and each subunit binds pheophytin, quinone, additional chlorophylls, carotenoids and lipids. There is also a Cl(-1) ion associated with D1 and D2, which is required for oxygen evolution. The PSII complex binds additional chlorophylls, carotenoids and specific lipids. as a cofactor.

It is found in the cellular thylakoid membrane. It carries out the reaction 2 a plastoquinone + 4 hnu + 2 H2O = 2 a plastoquinol + O2. In terms of biological role, photosystem II (PSII) is a light-driven water:plastoquinone oxidoreductase that uses light energy to abstract electrons from H(2)O, generating O(2) and a proton gradient subsequently used for ATP formation. It consists of a core antenna complex that captures photons, and an electron transfer chain that converts photonic excitation into a charge separation. The D1/D2 (PsbA/PsbD) reaction center heterodimer binds P680, the primary electron donor of PSII as well as several subsequent electron acceptors. D2 is needed for assembly of a stable PSII complex. This is Photosystem II D2 protein from Synechococcus sp. (strain CC9605).